The chain runs to 219 residues: Small ribosomal subunit protein uS5 (219 aa).

The region spanning 52–115 (LDDEVLDINM…DVAKLNLISV (64 aa)) is the S5 DRBM domain. Residues 196–219 (LRNASQSRTPRRAAAKQREQEVSE) form a disordered region.

It belongs to the universal ribosomal protein uS5 family. In terms of assembly, part of the 30S ribosomal subunit. Contacts protein S4.

Functionally, with S4 and S12 plays an important role in translational accuracy. This is Small ribosomal subunit protein uS5 from Haloquadratum walsbyi (strain DSM 16790 / HBSQ001).